The following is a 92-amino-acid chain: Small ribosomal subunit protein uS19 (92 aa).

This sequence belongs to the universal ribosomal protein uS19 family.

Protein S19 forms a complex with S13 that binds strongly to the 16S ribosomal RNA. The protein is Small ribosomal subunit protein uS19 of Staphylococcus carnosus (strain TM300).